An 824-amino-acid chain; its full sequence is AMP deaminase 2 (824 aa).

The disordered stretch occupies residues 1–43 (MASYPGPGKSKAKYPFKKRASLQASAAAPEARSGLGASPLQSA). A compositionally biased stretch (basic residues) spans 10 to 20 (SKAKYPFKKRA). Ser-21 is subject to Phosphoserine. Low complexity predominate over residues 21-33 (SLQASAAAPEARS). Arg-44 is modified (omega-N-methylarginine). Phosphoserine is present on residues Ser-45, Ser-63, and Ser-79. At Tyr-90 the chain carries Phosphotyrosine. Residues Ser-96 and Ser-113 each carry the phosphoserine modification. A Phosphothreonine modification is found at Thr-133. Ser-135 and Ser-137 each carry phosphoserine. Zn(2+) is bound by residues His-364 and His-366. Substrate is bound by residues His-366 and 435–440 (KFNAKY). His-633 contributes to the Zn(2+) binding site. Glu-636 is a binding site for substrate. His-655 serves as the catalytic Proton acceptor. Asp-710 contributes to the Zn(2+) binding site. Residue 711 to 714 (DPLQ) coordinates substrate.

The protein belongs to the metallo-dependent hydrolases superfamily. Adenosine and AMP deaminases family. In terms of assembly, homotetramer. It depends on Zn(2+) as a cofactor.

The catalysed reaction is AMP + H2O + H(+) = IMP + NH4(+). Its pathway is purine metabolism; IMP biosynthesis via salvage pathway; IMP from AMP: step 1/1. Its function is as follows. AMP deaminase plays a critical role in energy metabolism. Catalyzes the deamination of AMP to IMP and plays an important role in the purine nucleotide cycle. This chain is AMP deaminase 2, found in Rattus norvegicus (Rat).